Here is a 262-residue protein sequence, read N- to C-terminus: Cyclin-dependent kinase inhibitor 1 (262 aa).

Residues 140–212 (SDVAEAGSEH…SAQQATRPKI (73 aa)) form a disordered region. Residues 160-169 (SGRDRERRET) are compositionally biased toward basic and acidic residues. The span at 198–208 (SAATASAQQAT) shows a compositional bias: low complexity.

Belongs to the CDI family. ICK/KRP subfamily. As to expression, expressed in roots, stems, leaves and apex.

Regulates the production of endosperm cells, affecting seed filling and embryo development. Regulates endoreduplication of endosperm cells. May play a role in the exit from the mitotic cell cycle during rice grain formation. Inhibitis leaf elongation rates by decreasing cell number, that is partly compensated by increased cell size. May not affect growth rate or cell size of the primary root. The sequence is that of Cyclin-dependent kinase inhibitor 1 (KRP1) from Oryza sativa subsp. japonica (Rice).